The sequence spans 192 residues: Protein FAM210B, mitochondrial (192 aa).

The N-terminal 58 residues, 1-58 (MAGLLALLGPAGRVGARVRPRATWLLGATAPCAPPPLALALLPPRLDARLLRTARGDC), are a transit peptide targeting the mitochondrion. The segment at 57 to 80 (DCRGHQDPSQATGTTGSSVSCTEE) is disordered. Residues 63–77 (DPSQATGTTGSSVSC) show a composition bias toward polar residues. Residues 80–191 (EKKQSKSQQL…VGFFKPPAAK (112 aa)) form the DUF1279 domain. The next 2 membrane-spanning stretches (helical) occupy residues 99–119 (VGVS…YMVV) and 150–170 (FVVA…ITLV).

The protein belongs to the FAM210 family. In terms of tissue distribution, expressed in late erythroblast differentiation stages. Underexpressed in ovarian cancer epithelia cells compared with normal human ovarian surface epithelia.

The protein resides in the mitochondrion. Its subcellular location is the mitochondrion outer membrane. In terms of biological role, plays a role in erythroid differentiation. Involved in cell proliferation and tumor cell growth suppression. Involved in the metabolic reprogramming of cancer cells in a PDK4-dependent manner. The chain is Protein FAM210B, mitochondrial from Homo sapiens (Human).